A 367-amino-acid polypeptide reads, in one-letter code: tRNA/tmRNA (uracil-C(5))-methyltransferase (367 aa).

Gln190, Tyr218, Asn223, Glu239, and Asp299 together coordinate S-adenosyl-L-methionine. Catalysis depends on Cys324, which acts as the Nucleophile. Glu358 (proton acceptor) is an active-site residue.

This sequence belongs to the class I-like SAM-binding methyltransferase superfamily. RNA M5U methyltransferase family. TrmA subfamily.

The catalysed reaction is uridine(54) in tRNA + S-adenosyl-L-methionine = 5-methyluridine(54) in tRNA + S-adenosyl-L-homocysteine + H(+). It catalyses the reaction uridine(341) in tmRNA + S-adenosyl-L-methionine = 5-methyluridine(341) in tmRNA + S-adenosyl-L-homocysteine + H(+). Its function is as follows. Dual-specificity methyltransferase that catalyzes the formation of 5-methyluridine at position 54 (m5U54) in all tRNAs, and that of position 341 (m5U341) in tmRNA (transfer-mRNA). The polypeptide is tRNA/tmRNA (uracil-C(5))-methyltransferase (Yersinia pestis bv. Antiqua (strain Antiqua)).